The chain runs to 273 residues: Undecaprenyl-diphosphatase (273 aa).

Helical transmembrane passes span 54–74, 90–110, 116–136, 156–178, 190–210, 222–242, and 252–272; these read LGSILAVVVMFWRQLFGLIGI, LTLIHILLGMIPAVVLGLVFH, LFNPINVMYALVVGGLLLIAA, QAFMIGCFQCLALWPGFSRSGAT, YAASEFSFLLAVPMMMGATVL, ADIPMFAVGFVTAFVVALIAI, and ISFIPFAIYRFVVAAAVYVVF.

The protein belongs to the UppP family.

It is found in the cell inner membrane. It catalyses the reaction di-trans,octa-cis-undecaprenyl diphosphate + H2O = di-trans,octa-cis-undecaprenyl phosphate + phosphate + H(+). In terms of biological role, catalyzes the dephosphorylation of undecaprenyl diphosphate (UPP). Confers resistance to bacitracin. The sequence is that of Undecaprenyl-diphosphatase from Salmonella paratyphi A (strain ATCC 9150 / SARB42).